The sequence spans 59 residues: Potassium channel toxin alpha-KTx 16.7 (59 aa).

The first 22 residues, 1-22 (MKILSILLIALVICSISICTEA), serve as a signal peptide directing secretion. 3 disulfide bridges follow: Cys30/Cys51, Cys36/Cys56, and Cys40/Cys58.

It belongs to the short scorpion toxin superfamily. Potassium channel inhibitor family. Alpha-KTx 16 subfamily. In terms of tissue distribution, expressed by the venom gland.

It is found in the secreted. In terms of biological role, may play a role in blocking voltage-gated potassium channels Kv1.2/KCNA2, and Kv1.3/KCNA3. Blocks the voltage-gated potassium channel Kv1.3/KCNA3, with an IC(50) of 118.3 +-55.8 nM. The protein is Potassium channel toxin alpha-KTx 16.7 of Mesobuthus gibbosus (Mediterranean checkered scorpion).